The primary structure comprises 425 residues: Protein CLP1 homolog (425 aa).

ATP is bound by residues E18, K59, and 121–126; that span reads DVGKST.

Belongs to the Clp1 family. Clp1 subfamily.

It is found in the nucleus. Its function is as follows. Required for endonucleolytic cleavage during polyadenylation-dependent pre-mRNA 3'-end formation. This chain is Protein CLP1 homolog (cbc), found in Drosophila ananassae (Fruit fly).